The sequence spans 575 residues: Carboxylesterase 5A (575 aa).

The first 27 residues, 1–27, serve as a signal peptide directing secretion; sequence MSGEWGHLGQTLIWAVWVLAAATEGPA. Asn-82 is a glycosylation site (N-linked (GlcNAc...) asparagine). Cysteines 94 and 121 form a disulfide. Catalysis depends on Ser-226, which acts as the Acyl-ester intermediate. A disulfide bond links Cys-280 and Cys-291. Asn-281 is a glycosylation site (N-linked (GlcNAc...) asparagine). Glu-345 serves as the catalytic Charge relay system. A glycan (N-linked (GlcNAc...) asparagine) is linked at Asn-363. Residue His-454 is the Charge relay system of the active site. Asn-524 carries an N-linked (GlcNAc...) asparagine glycan.

Belongs to the type-B carboxylesterase/lipase family. N-glycosylated.

The protein localises to the secreted. The catalysed reaction is a carboxylic ester + H2O = an alcohol + a carboxylate + H(+). Functionally, involved in the detoxification of xenobiotics and in the activation of ester and amide prodrugs. The chain is Carboxylesterase 5A (CES5A) from Canis lupus familiaris (Dog).